The chain runs to 205 residues: Dr1-associated corepressor (205 aa).

A Histone-fold domain is found at proline 14–glutamate 77. The disordered stretch occupies residues proline 91–serine 205. Basic and acidic residues predominate over residues glutamate 98–proline 108. Residues serine 138–threonine 155 show a composition bias toward acidic residues. Residues proline 172 to proline 192 show a composition bias toward pro residues. Acidic residues predominate over residues aspartate 196–serine 205.

The protein belongs to the NC2 alpha/DRAP1 family. Heterodimer with DR1. Binds BTAF1. In terms of processing, phosphorylation reduces DNA binding, but has no effect on heterodimerization and TBP binding.

It is found in the nucleus. Functionally, the association of the DR1/DRAP1 heterodimer with TBP results in a functional repression of both activated and basal transcription of class II genes. This interaction precludes the formation of a transcription-competent complex by inhibiting the association of TFIIA and/or TFIIB with TBP. Can bind to DNA on its own. In Mus musculus (Mouse), this protein is Dr1-associated corepressor (Drap1).